The sequence spans 98 residues: Co-chaperonin GroES (98 aa).

The protein belongs to the GroES chaperonin family. In terms of assembly, heptamer of 7 subunits arranged in a ring. Interacts with the chaperonin GroEL.

The protein localises to the cytoplasm. Together with the chaperonin GroEL, plays an essential role in assisting protein folding. The GroEL-GroES system forms a nano-cage that allows encapsulation of the non-native substrate proteins and provides a physical environment optimized to promote and accelerate protein folding. GroES binds to the apical surface of the GroEL ring, thereby capping the opening of the GroEL channel. This Paenarthrobacter aurescens (strain TC1) protein is Co-chaperonin GroES.